We begin with the raw amino-acid sequence, 303 residues long: Probable aspartoacylase (303 aa).

Zn(2+) is bound by residues His13 and Glu16. Substrate is bound by residues Arg55 and 62 to 63 (NR). His104 contributes to the Zn(2+) binding site. Residues Glu162 and Tyr273 each contribute to the substrate site.

Belongs to the AspA/AstE family. Aspartoacylase subfamily. It depends on Zn(2+) as a cofactor.

The catalysed reaction is an N-acyl-L-aspartate + H2O = a carboxylate + L-aspartate. The chain is Probable aspartoacylase from Parasynechococcus marenigrum (strain WH8102).